Consider the following 674-residue polypeptide: uncharacterized protein (674 aa).

Residues 1-24 (MKTLKALKIFIIVYISSVSLESFA) form the signal peptide. Helical transmembrane passes span 226-246 (IIGAALILYTMFFAFNMALNK) and 254-274 (ITLFIIKFLFVVYFSIGLEPL). Residues 363–384 (GNGPGGNNKPIPNFDPDSKKDR) form a disordered region. 4 helical membrane passes run 409 to 429 (IIILVAGIAFSVIFLSILLYF), 436 to 456 (CMITIYVMTYISPIFIPMVLF), 469 to 489 (VCISCALQPAVVAGFIALLIT), and 562 to 582 (VVSILAELLCVLVFSVIFYYF). Residues 624-674 (SSVHAQGKSPVEDKPDIGSKRKDGVQQGEDSENSSGGELADLASGSGGGKL) form a disordered region. Residues 633-647 (PVEDKPDIGSKRKDG) are compositionally biased toward basic and acidic residues.

The protein belongs to the TrbL/VirB6 family.

The protein resides in the cell membrane. This is an uncharacterized protein from Rickettsia typhi (strain ATCC VR-144 / Wilmington).